A 157-amino-acid polypeptide reads, in one-letter code: Heat shock protein beta-9 (157 aa).

Residues 1–17 (MQRVGSSLPSGSQSASQ) are compositionally biased toward low complexity. 2 disordered regions span residues 1-20 (MQRV…QCPS) and 136-157 (PPSE…KKLA). The sHSP domain occupies 35–148 (QRLTEDAAAV…EAQTGPASRF (114 aa)). Residues 148–157 (FRSRGSKKLA) show a composition bias toward basic residues.

The protein belongs to the small heat shock protein (HSP20) family.

Its subcellular location is the cytoplasm. It is found in the nucleus. This chain is Heat shock protein beta-9 (HSPB9), found in Bos taurus (Bovine).